Reading from the N-terminus, the 398-residue chain is S-adenosylmethionine synthase (398 aa).

Histidine 26 lines the ATP pocket. Position 28 (aspartate 28) interacts with Mg(2+). Residue glutamate 54 coordinates K(+). Positions 67 and 110 each coordinate L-methionine. The flexible loop stretch occupies residues 110 to 120; it reads QSPDIAQGVNE. Residues 177–179, 243–244, aspartate 252, 258–259, alanine 275, and lysine 279 contribute to the ATP site; these read DAK, RF, and RK. Aspartate 252 contacts L-methionine. Lysine 283 serves as a coordination point for L-methionine.

This sequence belongs to the AdoMet synthase family. In terms of assembly, homotetramer; dimer of dimers. Mg(2+) is required as a cofactor. The cofactor is K(+).

It localises to the cytoplasm. It catalyses the reaction L-methionine + ATP + H2O = S-adenosyl-L-methionine + phosphate + diphosphate. It participates in amino-acid biosynthesis; S-adenosyl-L-methionine biosynthesis; S-adenosyl-L-methionine from L-methionine: step 1/1. Functionally, catalyzes the formation of S-adenosylmethionine (AdoMet) from methionine and ATP. The overall synthetic reaction is composed of two sequential steps, AdoMet formation and the subsequent tripolyphosphate hydrolysis which occurs prior to release of AdoMet from the enzyme. The sequence is that of S-adenosylmethionine synthase from Desulfotalea psychrophila (strain LSv54 / DSM 12343).